The sequence spans 354 residues: tRNA-specific 2-thiouridylase MnmA (354 aa).

ATP is bound by residues Leu6–Ser13 and Leu33. The active-site Nucleophile is Cys100. A disulfide bond links Cys100 and Cys195. Position 123 (Gly123) interacts with ATP. The tract at residues Lys145–Gln147 is interaction with tRNA. The active-site Cysteine persulfide intermediate is Cys195.

It belongs to the MnmA/TRMU family.

It localises to the cytoplasm. It catalyses the reaction S-sulfanyl-L-cysteinyl-[protein] + uridine(34) in tRNA + AH2 + ATP = 2-thiouridine(34) in tRNA + L-cysteinyl-[protein] + A + AMP + diphosphate + H(+). In terms of biological role, catalyzes the 2-thiolation of uridine at the wobble position (U34) of tRNA, leading to the formation of s(2)U34. The polypeptide is tRNA-specific 2-thiouridylase MnmA (Borrelia turicatae (strain 91E135)).